The chain runs to 244 residues: tRNA (guanine-N(1)-)-methyltransferase (244 aa).

Residues G113 and 132–137 (IGDYVL) contribute to the S-adenosyl-L-methionine site.

This sequence belongs to the RNA methyltransferase TrmD family. In terms of assembly, homodimer.

Its subcellular location is the cytoplasm. It catalyses the reaction guanosine(37) in tRNA + S-adenosyl-L-methionine = N(1)-methylguanosine(37) in tRNA + S-adenosyl-L-homocysteine + H(+). Its function is as follows. Specifically methylates guanosine-37 in various tRNAs. The chain is tRNA (guanine-N(1)-)-methyltransferase from Shouchella clausii (strain KSM-K16) (Alkalihalobacillus clausii).